We begin with the raw amino-acid sequence, 122 residues long: Large ribosomal subunit protein uL14 (122 aa).

The protein belongs to the universal ribosomal protein uL14 family. Part of the 50S ribosomal subunit. Forms a cluster with proteins L3 and L19. In the 70S ribosome, L14 and L19 interact and together make contacts with the 16S rRNA in bridges B5 and B8.

Its function is as follows. Binds to 23S rRNA. Forms part of two intersubunit bridges in the 70S ribosome. The protein is Large ribosomal subunit protein uL14 of Acidiphilium cryptum (strain JF-5).